The following is a 353-amino-acid chain: GTPase Obg (353 aa).

One can recognise an Obg domain in the interval M1–L159. One can recognise an OBG-type G domain in the interval A160–Y333. GTP contacts are provided by residues G166–S173, F191–V195, D212–G215, T283–D286, and S314–V316. The Mg(2+) site is built by S173 and T193.

This sequence belongs to the TRAFAC class OBG-HflX-like GTPase superfamily. OBG GTPase family. In terms of assembly, monomer. Requires Mg(2+) as cofactor.

Its subcellular location is the cytoplasm. Functionally, an essential GTPase which binds GTP, GDP and possibly (p)ppGpp with moderate affinity, with high nucleotide exchange rates and a fairly low GTP hydrolysis rate. Plays a role in control of the cell cycle, stress response, ribosome biogenesis and in those bacteria that undergo differentiation, in morphogenesis control. This Anaeromyxobacter sp. (strain Fw109-5) protein is GTPase Obg.